We begin with the raw amino-acid sequence, 348 residues long: Selenide, water dikinase (348 aa).

Sec17 is a catalytic residue. Position 17 (Sec17) is a non-standard amino acid, selenocysteine. ATP-binding positions include Lys20 and Thr48–Asp50. Asp51 provides a ligand contact to Mg(2+). ATP contacts are provided by residues Asp68, Asp91, and Gly138–Thr140. A Mg(2+)-binding site is contributed by Asp91. Asp226 serves as a coordination point for Mg(2+).

It belongs to the selenophosphate synthase 1 family. Class I subfamily. As to quaternary structure, homodimer. Mg(2+) is required as a cofactor.

The catalysed reaction is hydrogenselenide + ATP + H2O = selenophosphate + AMP + phosphate + 2 H(+). Synthesizes selenophosphate from selenide and ATP. The sequence is that of Selenide, water dikinase from Clostridioides difficile (strain 630) (Peptoclostridium difficile).